The chain runs to 138 residues: Hexon-interlacing protein (138 aa).

A coiled-coil region spans residues 100–127 (LLVLLAQLEALTQRLGELSKQVAQLREQ).

It belongs to the adenoviridae hexon-interlacing protein family. As to quaternary structure, homotrimer. Interacts with hexon protein; this interaction tethers the hexons together. Self-interacts with adjacent proteins. Interacts with kinesin light chain KLC1; this interaction leads to capsid disruption at the nuclear pore complex during virus entry into host cell.

The protein resides in the virion. Its subcellular location is the host nucleus. In terms of biological role, structural component of the virion that acts as a cement protein on the capsid exterior and forms triskelion structures consisting of three molecules that stabilize three hexon trimers at the center of each icosahedral facet and fixes the peripentonal hexons. Dispensable for assembly. During virus entry, recruits the anterograde motor kinesin-1 to the capsid docked at the nuclear pore complex thereby subjecting the docked capsid to a pulling force. The resulting tension leads to capsid disruption, dispersion of capsid fragments toward cell periphery and eventually viral DNA entry into the host nucleus. This Human adenovirus B serotype 7 (HAdV-7) protein is Hexon-interlacing protein.